The following is a 177-amino-acid chain: MTTIVSVRRNGQVVIGGDGQVSLGNTVMKGNARKVHRLYNGKVLAGFAGGTADAFTLLERFEAKLQAHQGNLERAAVALAKDWRTDRALRRLEALLAVADEHKSFIITGNGDVVQPEHDLIAIGSGGNFAQSAAIALLENTELDAKSIVEKSLKIAGDICVFTNGNHTIEVLDYSAK.

The active site involves threonine 2. Na(+)-binding residues include glycine 157, cysteine 160, and threonine 163.

Belongs to the peptidase T1B family. HslV subfamily. A double ring-shaped homohexamer of HslV is capped on each side by a ring-shaped HslU homohexamer. The assembly of the HslU/HslV complex is dependent on binding of ATP.

It is found in the cytoplasm. It catalyses the reaction ATP-dependent cleavage of peptide bonds with broad specificity.. Allosterically activated by HslU binding. Functionally, protease subunit of a proteasome-like degradation complex believed to be a general protein degrading machinery. The chain is ATP-dependent protease subunit HslV from Aeromonas hydrophila subsp. hydrophila (strain ATCC 7966 / DSM 30187 / BCRC 13018 / CCUG 14551 / JCM 1027 / KCTC 2358 / NCIMB 9240 / NCTC 8049).